The chain runs to 274 residues: Nuclease (274 aa).

The N-terminal stretch at 1 to 24 (MGICGKLGVAALVALIVGCSPVQS) is a signal peptide. The active-site Proton acceptor is the His124. 7 residues coordinate Mn(2+): Asn155, Asp246, Glu249, Asp255, Phe256, Gln265, and Glu269.

It belongs to the DNA/RNA non-specific endonuclease family. As to quaternary structure, monomer. Mn(2+) serves as cofactor. It depends on Mg(2+) as a cofactor. Requires Ca(2+) as cofactor. The cofactor is Co(2+). The N-terminus is blocked.

Its subcellular location is the periplasm. Functionally, catalyzes the degradation of both RNA and DNA; has the potential to act as an endonuclease. This is Nuclease (nucA) from Nostoc sp. (strain PCC 7120 / SAG 25.82 / UTEX 2576).